A 90-amino-acid polypeptide reads, in one-letter code: Cell division topological specificity factor (90 aa).

It belongs to the MinE family.

Its function is as follows. Prevents the cell division inhibition by proteins MinC and MinD at internal division sites while permitting inhibition at polar sites. This ensures cell division at the proper site by restricting the formation of a division septum at the midpoint of the long axis of the cell. In Clostridium perfringens (strain SM101 / Type A), this protein is Cell division topological specificity factor.